A 159-amino-acid chain; its full sequence is Probable minor fimbrial protein (159 aa).

Residues 1–6 (MKKMHG) constitute a propeptide, leader sequence. Phe7 carries the N-methylphenylalanine modification. The chain crosses the membrane as a helical span at residues 7 to 27 (FTLIELMIVVAIIGVLASTAL). 2 disulfides stabilise this stretch: Cys56–Cys71 and Cys140–Cys153.

The protein belongs to the N-Me-Phe pilin family. The pili are polar flexible filaments of about 5.4 nanometers diameter and 2.5 micrometers average length; they consist of only a single polypeptide chain arranged in a helical configuration of five subunits per turn in the assembled pilus.

The protein resides in the fimbrium. It localises to the membrane. The sequence is that of Probable minor fimbrial protein (fimZ) from Dichelobacter nodosus (Bacteroides nodosus).